The chain runs to 311 residues: Pyrimidine-specific ribonucleoside hydrolase RihA (311 aa).

His240 is an active-site residue.

It belongs to the IUNH family. RihA subfamily.

Hydrolyzes cytidine or uridine to ribose and cytosine or uracil, respectively. The polypeptide is Pyrimidine-specific ribonucleoside hydrolase RihA (Salmonella arizonae (strain ATCC BAA-731 / CDC346-86 / RSK2980)).